The chain runs to 356 residues: Phosphate acyltransferase (356 aa).

It belongs to the PlsX family. Homodimer. Probably interacts with PlsY.

Its subcellular location is the cytoplasm. It catalyses the reaction a fatty acyl-[ACP] + phosphate = an acyl phosphate + holo-[ACP]. It functions in the pathway lipid metabolism; phospholipid metabolism. Functionally, catalyzes the reversible formation of acyl-phosphate (acyl-PO(4)) from acyl-[acyl-carrier-protein] (acyl-ACP). This enzyme utilizes acyl-ACP as fatty acyl donor, but not acyl-CoA. The sequence is that of Phosphate acyltransferase from Shigella sonnei (strain Ss046).